Consider the following 301-residue polypeptide: Protein p34 (301 aa).

Transmembrane regions (helical) follow at residues 15 to 35 (YLSVTTALIILSIKLYAWVVT), 40 to 60 (ILAALIDSMLDITSSFINLIA), 83 to 103 (TIFSQSIFFFASAFFVGFSSV), 120 to 140 (TVMYVCIFLTIILVFYQTYVI), and 171 to 191 (LSDYFWFVDPLFGVVISLYIF).

The protein belongs to the cation diffusion facilitator (CDF) transporter (TC 2.A.4) family.

The protein localises to the cell membrane. The sequence is that of Protein p34 (p34) from Rickettsia rickettsii (strain Sheila Smith).